A 359-amino-acid polypeptide reads, in one-letter code: Phosphate acyltransferase (359 aa).

The disordered stretch occupies residues 335 to 359 (SGAGGAATGSPETDAPNPHPDSRAA).

Belongs to the PlsX family. In terms of assembly, homodimer. Probably interacts with PlsY.

It is found in the cytoplasm. The catalysed reaction is a fatty acyl-[ACP] + phosphate = an acyl phosphate + holo-[ACP]. Its pathway is lipid metabolism; phospholipid metabolism. Functionally, catalyzes the reversible formation of acyl-phosphate (acyl-PO(4)) from acyl-[acyl-carrier-protein] (acyl-ACP). This enzyme utilizes acyl-ACP as fatty acyl donor, but not acyl-CoA. The polypeptide is Phosphate acyltransferase (Cupriavidus metallidurans (strain ATCC 43123 / DSM 2839 / NBRC 102507 / CH34) (Ralstonia metallidurans)).